Reading from the N-terminus, the 457-residue chain is UDP-N-acetylmuramate--L-alanine ligase (457 aa).

112–118 serves as a coordination point for ATP; it reads GTHGKTT.

The protein belongs to the MurCDEF family.

It is found in the cytoplasm. It catalyses the reaction UDP-N-acetyl-alpha-D-muramate + L-alanine + ATP = UDP-N-acetyl-alpha-D-muramoyl-L-alanine + ADP + phosphate + H(+). Its pathway is cell wall biogenesis; peptidoglycan biosynthesis. Cell wall formation. This is UDP-N-acetylmuramate--L-alanine ligase from Solidesulfovibrio magneticus (strain ATCC 700980 / DSM 13731 / RS-1) (Desulfovibrio magneticus).